Consider the following 102-residue polypeptide: Spexin prohormone 1 (102 aa).

The first 26 residues, methionine 1–serine 26, serve as a signal peptide directing secretion. Residues alanine 27–arginine 35 constitute a propeptide that is removed on maturation. Glutamine amide is present on glutamine 49. The propeptide occupies glycine 50–tyrosine 102.

The protein belongs to the spexin family. In terms of tissue distribution, expressed in the anterior hypothalamus, ventromedial thalamic nucleus and medial longitudinal fasciculus of the brain (at protein level). Widely expressed. Expressed predominantly in the spleen, kidney, liver and testis. Expressed in olfactory bulb, pituitary, telencephalon, diencephalons, spinal cord, optic tectum, cerebellum and hypothalamus of the brain.

It localises to the secreted. The protein resides in the extracellular space. It is found in the cytoplasmic vesicle. The protein localises to the secretory vesicle. Functionally, plays a role in the regulation of food intake and body weight and in reproduction. May also play a role as a central modulator of cardiovascular and renal function and nociception. In terms of biological role, brain administration of the peptide inhibits food consumption. May function as a satiety factor for feeding control. Involved in the negative regulation of the reproductive axis by inhibiting luteinizing hormone secretion from pituitary cells. The sequence is that of Spexin prohormone 1 (spx) from Carassius auratus (Goldfish).